The following is a 696-amino-acid chain: DNA-directed RNA polymerase subunit beta' (696 aa).

4 residues coordinate Zn(2+): C69, C71, C87, and C90. Residues D504, D506, and D508 each contribute to the Mg(2+) site.

Belongs to the RNA polymerase beta' chain family. RpoC1 subfamily. In plastids the minimal PEP RNA polymerase catalytic core is composed of four subunits: alpha, beta, beta', and beta''. When a (nuclear-encoded) sigma factor is associated with the core the holoenzyme is formed, which can initiate transcription. Mg(2+) serves as cofactor. The cofactor is Zn(2+).

It is found in the plastid. The protein localises to the chloroplast. The enzyme catalyses RNA(n) + a ribonucleoside 5'-triphosphate = RNA(n+1) + diphosphate. Functionally, DNA-dependent RNA polymerase catalyzes the transcription of DNA into RNA using the four ribonucleoside triphosphates as substrates. The polypeptide is DNA-directed RNA polymerase subunit beta' (Pinus koraiensis (Korean pine)).